The chain runs to 191 residues: Protein RER1A (191 aa).

N-acetylmethionine is present on M1. The next 4 membrane-spanning stretches (helical) occupy residues 39–57 (YRWIGTLVVALIYCLRVYY), 60–80 (GFYIIAYGLGIYLLNLLIGFL), 115–135 (FKFWYSMTKAFCIAFLMTFFS), and 136–156 (VFDVPVFWPILLCYWIVLFVL).

Belongs to the RER1 family.

Its subcellular location is the membrane. Functionally, involved in the retrieval of endoplasmic reticulum membrane proteins from the early Golgi compartment. The protein is Protein RER1A (RER1A) of Arabidopsis thaliana (Mouse-ear cress).